Reading from the N-terminus, the 510-residue chain is Anaerobic nitric oxide reductase transcription regulator NorR (510 aa).

In terms of domain architecture, Sigma-54 factor interaction spans 188 to 417; that stretch reads IIGNSQGMRT…LEHVIKRAAV (230 aa). ATP is bound by residues 216 to 223 and 279 to 288; these read GETGVGKE and ADGGTLFLDE. The segment at residues 486-505 is a DNA-binding region (H-T-H motif); sequence WAATARQLELDSGNLHRLAK.

It participates in nitrogen metabolism; nitric oxide reduction. In terms of biological role, required for the expression of anaerobic nitric oxide (NO) reductase, acts as a transcriptional activator for at least the norVW operon. Activation also requires sigma-54. The polypeptide is Anaerobic nitric oxide reductase transcription regulator NorR (Vibrio vulnificus (strain CMCP6)).